The sequence spans 614 residues: Sodium- and chloride-dependent betaine transporter (614 aa).

The Cytoplasmic portion of the chain corresponds to 1-44; sequence MDRKVTVHEDGCPVVSWVPEEGEMMDQKDKDQVKDRGQWTNKME. 3 helical membrane-spanning segments follow: residues 45–65, 73–92, and 117–137; these read FVLSVAGEIIGLGNVWRFPYL, AFFIPYFIFFFSCGIPVFFL, and GIGMASVVIESYLNIYYIIIL. The Extracellular segment spans residues 138–210; the sequence is AWALFYLFSS…SGIHDLGSLR (73 aa). N-linked (GlcNAc...) asparagine glycosylation is found at Asn171 and Asn183. The next 9 helical transmembrane spans lie at 211–229, 238–255, 291–308, 320–341, 374–393, 423–441, 458–478, 499–518, and 538–556; these read WELALCLLLAWIICYFCIW, VVYFTATFPYLMLIILLI, IFFSFAICQGCLTALGSY, IALCFLNSATSFVAGFVVFSIL, MPLSQLWSCLFFLMLLFLGL, LLILAVAIVCYLMGLLLVT, GICLLFLSLFEVICIGWVYGA, ISWLFLTPGLCLATFFFSLS, and IGWLLAFSSMACVPLFIII. The Cytoplasmic segment spans residues 557-614; sequence TLLKTQGSFKKRLQRLITPDPSLPQPGRRSPQDGSSAQNCSTSPVKQELIAWEKETHL. The interval 574–600 is disordered; that stretch reads TPDPSLPQPGRRSPQDGSSAQNCSTSP. Residue Ser586 is modified to Phosphoserine. The segment covering 588–600 has biased composition (polar residues); sequence QDGSSAQNCSTSP.

The protein belongs to the sodium:neurotransmitter symporter (SNF) (TC 2.A.22) family. SLC6A12 subfamily. In terms of assembly, interacts with LIN7C.

It localises to the basolateral cell membrane. It is found in the cell membrane. It catalyses the reaction 4-aminobutanoate(out) + chloride(out) + 3 Na(+)(out) = 4-aminobutanoate(in) + chloride(in) + 3 Na(+)(in). It carries out the reaction glycine betaine(out) + 2 chloride(out) + 3 Na(+)(out) = glycine betaine(in) + 2 chloride(in) + 3 Na(+)(in). Functionally, transporter that mediates cellular uptake of betaine and GABA in a sodium- and chloride-dependent process. May have a role in regulation of GABAergic transmission in the brain through the reuptake of GABA into presynaptic terminals, as well as in osmotic regulation. Probably also involved in renal and hepatic osmotic regulation. In Rattus norvegicus (Rat), this protein is Sodium- and chloride-dependent betaine transporter (Slc6a12).